The sequence spans 115 residues: Hydrogenase maturation factor HypA (115 aa).

A Ni(2+)-binding site is contributed by H2. Residues C73, C76, C89, and C92 each coordinate Zn(2+).

Belongs to the HypA/HybF family.

Its function is as follows. Involved in the maturation of [NiFe] hydrogenases. Required for nickel insertion into the metal center of the hydrogenase. This chain is Hydrogenase maturation factor HypA, found in Aquifex aeolicus (strain VF5).